Consider the following 176-residue polypeptide: MDLPGPIHDILLVFLGSGLILGGLGVVLFTTPIYSAFSLGLVFVCISLFYIPSNSYFVAAAQLLIYVGAVNVLIVFAVMFMNGSEYYKDFHLWTVGDGITSLVCTSILFSLITTILETSWYGIIWTTRSNQIIEQDLTSNVQQMGIHLSTDFYLPFELTSIILLVALIGAIAMARQ.

5 helical membrane passes run 10–30, 32–52, 61–81, 90–112, and 152–172; these read ILLV…VLFT, PIYS…FYIP, AQLL…VMFM, FHLW…FSLI, and FYLP…GAIA.

The protein belongs to the complex I subunit 6 family. NDH is composed of at least 16 different subunits, 5 of which are encoded in the nucleus.

The protein resides in the plastid. Its subcellular location is the chloroplast thylakoid membrane. It carries out the reaction a plastoquinone + NADH + (n+1) H(+)(in) = a plastoquinol + NAD(+) + n H(+)(out). It catalyses the reaction a plastoquinone + NADPH + (n+1) H(+)(in) = a plastoquinol + NADP(+) + n H(+)(out). NDH shuttles electrons from NAD(P)H:plastoquinone, via FMN and iron-sulfur (Fe-S) centers, to quinones in the photosynthetic chain and possibly in a chloroplast respiratory chain. The immediate electron acceptor for the enzyme in this species is believed to be plastoquinone. Couples the redox reaction to proton translocation, and thus conserves the redox energy in a proton gradient. The protein is NAD(P)H-quinone oxidoreductase subunit 6, chloroplastic (ndhG) of Ceratophyllum demersum (Rigid hornwort).